A 420-amino-acid polypeptide reads, in one-letter code: Gamma-glutamyl phosphate reductase (420 aa).

Belongs to the gamma-glutamyl phosphate reductase family.

The protein localises to the cytoplasm. The enzyme catalyses L-glutamate 5-semialdehyde + phosphate + NADP(+) = L-glutamyl 5-phosphate + NADPH + H(+). Its pathway is amino-acid biosynthesis; L-proline biosynthesis; L-glutamate 5-semialdehyde from L-glutamate: step 2/2. Catalyzes the NADPH-dependent reduction of L-glutamate 5-phosphate into L-glutamate 5-semialdehyde and phosphate. The product spontaneously undergoes cyclization to form 1-pyrroline-5-carboxylate. The sequence is that of Gamma-glutamyl phosphate reductase from Neisseria meningitidis serogroup B (strain ATCC BAA-335 / MC58).